The following is a 421-amino-acid chain: MRVLRLTPFFHHDCVTAWPAEFDAVGGMQVQILRLSRELADRGVEQLVMTVGFPGLPRERVDRPGLRVRVTRAPLPRLRSELTGLVGLNQAWLAAVLTACAPLRRTWRPDLVHVHADGQLWALLAGPLVSRLVGAPYCLTLHCSRLASYEPMSRFDRLQHRLVAAAERYALRRARRVSTLTSRTADTVARLLPLDRALVDVLPDSVGDVRPVARPEAEEYVRSLGVPAGRPVVGWVGRVAHEKGWRDFVAMAERWDAGSGAPGAVFAVVGDGPQRERMREAVEAAGLADRFVFTGFLPHDAVPSVMTALDVLVMPSAHEELGGSALEAMVCGTPVAGYAVGGLRDTVGSVTPSLLVPRGDVAALTRAAGDAVTDAERHRKTVAAAVPDLLGRYGADTVERALEHYRLAVGRASGGGAGWAP.

It belongs to the glycosyltransferase group 1 family. Glycosyltransferase 4 subfamily.

It catalyses the reaction 2-deoxystreptamine + UDP-N-acetyl-alpha-D-glucosamine = 2'-N-acetylparomamine + UDP + H(+). It participates in antibiotic biosynthesis; neomycin biosynthesis. Its function is as follows. Glycosyltransferase involved in the biosynthesis of neomycin by mediating conversion of 2-deoxystreptamine (2-DOS) to 2'-N-acetylparomamine using UDP-alpha-D-glucosamine as sugar donor. The protein is 2-deoxystreptamine N-acetyl-D-glucosaminyltransferase (neoD) of Streptomyces fradiae (Streptomyces roseoflavus).